The chain runs to 693 residues: Putative adenosylcobalamin-dependent ribonucleoside-triphosphate reductase (693 aa).

C90 and C386 form a disulfide bridge. Residues C375 and E377 contribute to the active site.

This sequence belongs to the class II ribonucleoside-triphosphate reductase family. It depends on adenosylcob(III)alamin as a cofactor.

It carries out the reaction a 2'-deoxyribonucleoside 5'-triphosphate + [thioredoxin]-disulfide + H2O = a ribonucleoside 5'-triphosphate + [thioredoxin]-dithiol. The chain is Putative adenosylcobalamin-dependent ribonucleoside-triphosphate reductase (50) from Mycobacterium phage D29 (Mycobacteriophage D29).